A 363-amino-acid polypeptide reads, in one-letter code: Peptide chain release factor 1 (363 aa).

An N5-methylglutamine modification is found at glutamine 237. The span at 284–296 shows a compositional bias: basic and acidic residues; sequence EDEKRRSAEESTR. The interval 284–306 is disordered; sequence EDEKRRSAEESTRRSLVASGDRS.

The protein belongs to the prokaryotic/mitochondrial release factor family. Methylated by PrmC. Methylation increases the termination efficiency of RF1.

The protein resides in the cytoplasm. Peptide chain release factor 1 directs the termination of translation in response to the peptide chain termination codons UAG and UAA. The polypeptide is Peptide chain release factor 1 (Shewanella putrefaciens (strain CN-32 / ATCC BAA-453)).